The primary structure comprises 427 residues: Serine--tRNA ligase (427 aa).

Residue 233–235 (TGE) coordinates L-serine. ATP is bound at residue 264–266 (RSE). Glutamate 287 is a binding site for L-serine. 351–354 (EVSS) serves as a coordination point for ATP. Serine 387 provides a ligand contact to L-serine.

The protein belongs to the class-II aminoacyl-tRNA synthetase family. Type-1 seryl-tRNA synthetase subfamily. As to quaternary structure, homodimer. The tRNA molecule binds across the dimer.

Its subcellular location is the cytoplasm. It catalyses the reaction tRNA(Ser) + L-serine + ATP = L-seryl-tRNA(Ser) + AMP + diphosphate + H(+). The catalysed reaction is tRNA(Sec) + L-serine + ATP = L-seryl-tRNA(Sec) + AMP + diphosphate + H(+). It participates in aminoacyl-tRNA biosynthesis; selenocysteinyl-tRNA(Sec) biosynthesis; L-seryl-tRNA(Sec) from L-serine and tRNA(Sec): step 1/1. In terms of biological role, catalyzes the attachment of serine to tRNA(Ser). Is also able to aminoacylate tRNA(Sec) with serine, to form the misacylated tRNA L-seryl-tRNA(Sec), which will be further converted into selenocysteinyl-tRNA(Sec). This is Serine--tRNA ligase from Buchnera aphidicola subsp. Acyrthosiphon pisum (strain 5A).